Consider the following 29-residue polypeptide: Small toxic protein ZorO (29 aa).

A helical transmembrane segment spans residues 10–27 (VLIAVLELLVALLRLIDL).

Its subcellular location is the cell inner membrane. Functionally, toxic component of a type I toxin-antitoxin (TA) system. Expression in the absence of its cognate antitoxin (small sRNA orzO) leads to cell stasis and a decrease in colony-forming units. Repression of ZorO toxicity requires base pairing between zorO mRNA and sRNA OrzO, as well as RNase III (rnc), suggesting the mRNA is degraded. Base pairing occurs between 18 bases in the 5' UTR of zorO mRNA and the 5' end of OrzO sRNA. sRNA OrzP, which differs only in 4 of these 18 bases, does not repress ZorO toxicity. Integration of the protein into the inner membrane damages membrane integrity and affects membrane potential. It leads to increased levels of hydroxyl radicals. In Escherichia coli O157:H7, this protein is Small toxic protein ZorO.